The sequence spans 309 residues: Testis-expressed protein 264 homolog (309 aa).

The Lumenal segment spans residues 1–3 (MPD). The chain crosses the membrane as a helical; Signal-anchor for type III membrane protein span at residues 4-24 (LLLLGLIGALTLLLLLTLLAF). Residues 25 to 309 (AGYSGLLTGV…ELSTPERGEE (285 aa)) lie on the Cytoplasmic side of the membrane. The tract at residues 193 to 309 (PEVKETERKC…ELSTPERGEE (117 aa)) is disordered. Residues 208–225 (ATDTQTDGTGADTSDASS) show a composition bias toward low complexity. 2 positions are modified to phosphoserine: Ser-238 and Ser-243. The span at 250–262 (GWDDGDNRSEHSY) shows a compositional bias: basic and acidic residues. Residues 263 to 272 (SESGASGSSF) show a composition bias toward low complexity. Residues 272–275 (FEEL) carry the LIR motif motif.

In terms of assembly, interacts (via the LIR motif) with ATG8 family proteins MAP1LC3A, MAP1LC3B, GABARAP and GABARAPL1. Interacts with VCP/p97; bridging VCP/p97 to covalent DNA-protein cross-links (DPCs). Interacts with TOP1 (when sumoylated).

The protein resides in the endoplasmic reticulum membrane. It is found in the cytoplasmic vesicle. It localises to the autophagosome. Its subcellular location is the cytoplasm. The protein localises to the cytosol. The protein resides in the nucleus. It is found in the chromosome. In terms of biological role, major reticulophagy (also called ER-phagy) receptor that acts independently of other candidate reticulophagy receptors to remodel subdomains of the endoplasmic reticulum into autophagosomes upon nutrient stress, which then fuse with lysosomes for endoplasmic reticulum turnover. The ATG8-containing isolation membrane (IM) cradles a tubular segment of TEX264-positive ER near a three-way junction, allowing the formation of a synapse of 2 juxtaposed membranes with trans interaction between the TEX264 and ATG8 proteins. Expansion of the IM would extend the capture of ER, possibly through a 'zipper-like' process involving continued trans TEX264-ATG8 interactions, until poorly understood mechanisms lead to the fission of relevant membranes and, ultimately, autophagosomal membrane closure. Also involved in the repair of covalent DNA-protein cross-links (DPCs) during DNA synthesis: acts by bridging VCP/p97 to covalent DNA-protein cross-links (DPCs) and initiating resolution of DPCs by SPRTN. This is Testis-expressed protein 264 homolog from Mus musculus (Mouse).